Reading from the N-terminus, the 501-residue chain is Envelope glycoprotein C homolog (501 aa).

An N-terminal signal peptide occupies residues 1 to 27 (MLTPRVLRALGWTGLFFLLLSPSNVLG). At 28 to 465 (ASLSRDLETP…DATPSARGTP (438 aa)) the chain is on the virion surface side. Asn46 carries N-linked (GlcNAc...) asparagine; by host glycosylation. The segment at 53–87 (PLTEVPHAPSTESVSTNSESTNEHTITETTGKNAY) is disordered. A compositionally biased stretch (low complexity) spans 62–72 (STESVSTNSES). Residues Asn91, Asn100, Asn120, Asn212, Asn354, Asn400, and Asn429 are each glycosylated (N-linked (GlcNAc...) asparagine; by host). Residues 258–356 (PASVDVLAPP…GDMISTTNAT (99 aa)) enclose the Ig-like domain. Residues 466–492 (MVITVTAVLGLAVILGMGIIMTALCLY) form a helical membrane-spanning segment. Residues 493 to 501 (NSTRKNIRL) are Cytoplasmic-facing.

It belongs to the herpesviridae glycoprotein C family.

It localises to the secreted. Its subcellular location is the host cell membrane. Its function is as follows. May play an immunoevasive role in the pathogenesis of Marek's disease. It is a candidate for causing the early-stage immunosuppression that occurs after MDHV infection. This is Envelope glycoprotein C homolog (gC) from Gallus gallus (Chicken).